Reading from the N-terminus, the 197-residue chain is HTH-type transcriptional regulator BetI (197 aa).

Positions 8-68 constitute an HTH tetR-type domain; sequence PIRRSQLIHA…ATMRHLLSAL (61 aa). The segment at residues 31–50 is a DNA-binding region (H-T-H motif); the sequence is SIALIARLAGVSNGIISHYF.

Its pathway is amine and polyamine biosynthesis; betaine biosynthesis via choline pathway [regulation]. Repressor involved in the biosynthesis of the osmoprotectant glycine betaine. It represses transcription of the choline transporter BetT and the genes of BetAB involved in the synthesis of glycine betaine. The sequence is that of HTH-type transcriptional regulator BetI from Pseudomonas aeruginosa (strain LESB58).